The primary structure comprises 102 residues: Urease subunit beta (102 aa).

Belongs to the urease beta subunit family. In terms of assembly, heterotrimer of UreA (gamma), UreB (beta) and UreC (alpha) subunits. Three heterotrimers associate to form the active enzyme.

It is found in the cytoplasm. The enzyme catalyses urea + 2 H2O + H(+) = hydrogencarbonate + 2 NH4(+). It functions in the pathway nitrogen metabolism; urea degradation; CO(2) and NH(3) from urea (urease route): step 1/1. This Blochmanniella pennsylvanica (strain BPEN) protein is Urease subunit beta.